A 238-amino-acid polypeptide reads, in one-letter code: MAEPVYRRVVVKLSGEYLAGPHSFGIDQPTVDRIADDLIAVQKLGIEIAVVVGGGNMVRGVEVSSQGVSRATGDTMGMLATVMNSLALEAALQRKGAPAVALSAFVMPQVCELFTRAAAHRALAEGRIVVLGGGTGNPYFTTDTTAVLRAAEIGAQAVLKATNVDGVYSADPKKDPAAKRFDRLTHSQAIEGGYKVMDATAFALARETSLPIIVFSIAEPGAIGAMLRGEGRGTIVAG.

Position 12–15 (12–15 (KLSG)) interacts with ATP. Residue glycine 54 coordinates UMP. ATP-binding residues include glycine 55 and arginine 59. Residues aspartate 74 and 135–142 (TGNPYFTT) contribute to the UMP site. 4 residues coordinate ATP: threonine 162, asparagine 163, tyrosine 168, and aspartate 171.

This sequence belongs to the UMP kinase family. As to quaternary structure, homohexamer.

It is found in the cytoplasm. It carries out the reaction UMP + ATP = UDP + ADP. It participates in pyrimidine metabolism; CTP biosynthesis via de novo pathway; UDP from UMP (UMPK route): step 1/1. Its activity is regulated as follows. Inhibited by UTP. Its function is as follows. Catalyzes the reversible phosphorylation of UMP to UDP. This chain is Uridylate kinase, found in Bradyrhizobium sp. (strain ORS 278).